Consider the following 259-residue polypeptide: Ubiquitin-conjugating enzyme E2 J2 (259 aa).

Over 1–226 (MSNNSNKRAP…AGLPQANRHH (226 aa)) the chain is Cytoplasmic. The UBC core domain occupies 12 to 162 (TATQRLKQDY…DKVFCELFPE (151 aa)). The active-site Glycyl thioester intermediate is the C94. Residues 227 to 247 (GLLGGALANLFVIVGFAAFAY) form a helical; Anchor for type IV membrane protein membrane-spanning segment. Residues 248–259 (TVKYVLRSIAQE) lie on the Lumenal side of the membrane.

The protein belongs to the ubiquitin-conjugating enzyme family. In terms of assembly, interacts with murid herpesvirus 4 protein K3 (mK3).

The protein resides in the endoplasmic reticulum membrane. The enzyme catalyses S-ubiquitinyl-[E1 ubiquitin-activating enzyme]-L-cysteine + [E2 ubiquitin-conjugating enzyme]-L-cysteine = [E1 ubiquitin-activating enzyme]-L-cysteine + S-ubiquitinyl-[E2 ubiquitin-conjugating enzyme]-L-cysteine.. It functions in the pathway protein modification; protein ubiquitination. Its function is as follows. Catalyzes the covalent attachment of ubiquitin to other proteins. Seems to function in the selective degradation of misfolded membrane proteins from the endoplasmic reticulum (ERAD). In cooperation with the GATOR2 complex, catalyzes 'Lys-6'-linked ubiquitination of NPRL2. In case of infection by the murid herpesvirus 4, its association with the viral E3 ligase K3 mediates ubiquitination of host surface class I (MHC-I) H-2D(b)/H2-D1 and H-2K(b)/H2-K1 molecules before they exit the endoplasmic reticulum, leading to their degradation by the ERAD system, thus blocking the immune detection of virus-infected cells. The complex formed with the murid herpesvirus 4 protein K3 mediates ubiquitination of lysine, as well as serine and threonine residues present in the cytoplasmic tail of surface class I molecules and promotes ubiquitination of hydroxylated serine or threonine residues via ester bonds instead of the classical isopeptide linkage. The chain is Ubiquitin-conjugating enzyme E2 J2 (Ube2j2) from Mus musculus (Mouse).